We begin with the raw amino-acid sequence, 187 residues long: Large ribosomal subunit protein uL24c (187 aa).

A chloroplast-targeting transit peptide spans 1 to 41; sequence MAALQSSFAGLSTSFFGQRFSPPLSLPPLVKSTEGPCLIQA.

The protein belongs to the universal ribosomal protein uL24 family. As to quaternary structure, part of the 50S ribosomal subunit.

The protein resides in the plastid. It localises to the chloroplast. In terms of biological role, one of two assembly initiator proteins, it binds directly to the 5'-end of the 23S rRNA, where it nucleates assembly of the 50S subunit. The polypeptide is Large ribosomal subunit protein uL24c (RPL24) (Nicotiana tabacum (Common tobacco)).